The sequence spans 612 residues: Alpha-1,3-galactosidase B (612 aa).

The N-terminal stretch at 1-19 (MKWYLWGAVVLLYSLFGSA) is a signal peptide. A lipid anchor (N-palmitoyl cysteine) is attached at Cys20. Cys20 carries the S-diacylglycerol cysteine lipid modification. PbH1 repeat units follow at residues 431-453 (TPTV…LFST), 454-476 (PRQT…LLCG), and 487-536 (CRNV…VIDA).

Belongs to the glycosyl hydrolase 110 family. B subfamily.

The protein localises to the cell membrane. It carries out the reaction Hydrolysis of terminal, non-reducing branched (1-&gt;3)-alpha-D-galactosidic residues, producing free D-galactose.. The enzyme catalyses Hydrolysis of terminal, non-reducing linear (1-&gt;3)-alpha-D-galactosidic residues, producing free D-galactose.. It catalyses the reaction Hydrolysis of terminal, non-reducing alpha-D-galactose residues in alpha-D-galactosides, including galactose oligosaccharides, galactomannans and galactolipids.. Alpha-galactosidase. Removes both branched alpha-1,3-linked galactose residues of blood group B antigens and linear alpha-1,3-linked galactose structures. This is Alpha-1,3-galactosidase B (glaB) from Parabacteroides distasonis (strain ATCC 8503 / DSM 20701 / CIP 104284 / JCM 5825 / NCTC 11152).